Here is a 127-residue protein sequence, read N- to C-terminus: Large ribosomal subunit protein bL20 (127 aa).

It belongs to the bacterial ribosomal protein bL20 family.

Functionally, binds directly to 23S ribosomal RNA and is necessary for the in vitro assembly process of the 50S ribosomal subunit. It is not involved in the protein synthesizing functions of that subunit. The protein is Large ribosomal subunit protein bL20 of Streptomyces griseus subsp. griseus (strain JCM 4626 / CBS 651.72 / NBRC 13350 / KCC S-0626 / ISP 5235).